A 339-amino-acid polypeptide reads, in one-letter code: Ferredoxin--NADP reductase (339 aa).

7 residues coordinate FAD: Asp-36, Gln-44, Tyr-49, Val-89, Phe-123, Asp-290, and Thr-331.

It belongs to the ferredoxin--NADP reductase type 2 family. As to quaternary structure, homodimer. FAD is required as a cofactor.

It catalyses the reaction 2 reduced [2Fe-2S]-[ferredoxin] + NADP(+) + H(+) = 2 oxidized [2Fe-2S]-[ferredoxin] + NADPH. The protein is Ferredoxin--NADP reductase of Acidiphilium cryptum (strain JF-5).